The chain runs to 101 residues: U1-sicaritoxin-Li1a (101 aa).

Positions 1–19 are cleaved as a signal peptide; the sequence is MRFLVGAVLVVVLVACATA. A propeptide spanning residues 20–35 is cleaved from the precursor; sequence FESDAETFKSLVVEER. Cystine bridges form between C37–C54, C45–C59, C53–C72, and C61–C70. Lysine amide is present on K81. The propeptide occupies 85 to 101; sequence ALLLPVETHRLLFPEQW.

Belongs to the neurotoxin 28 (Litx) family. Expressed by the venom gland.

The protein resides in the secreted. Its function is as follows. Toxin active against insects (S.frugiperda larvae). May act on sodium (Nav) or calcium channels (Cav). The polypeptide is U1-sicaritoxin-Li1a (Loxosceles intermedia (Brown spider)).